The sequence spans 92 residues: Small ribosomal subunit protein uS19 (92 aa).

Belongs to the universal ribosomal protein uS19 family.

In terms of biological role, protein S19 forms a complex with S13 that binds strongly to the 16S ribosomal RNA. This chain is Small ribosomal subunit protein uS19, found in Aliivibrio fischeri (strain ATCC 700601 / ES114) (Vibrio fischeri).